A 295-amino-acid chain; its full sequence is Protoheme IX farnesyltransferase 2 (295 aa).

9 consecutive transmembrane segments (helical) span residues 9–29 (ITKP…FFLA), 36–56 (FALF…GCVF), 83–103 (LTLA…LLYV), 108–128 (LAAF…SLWL), 135–155 (GTLV…CAVS), 163–183 (VTLL…IAIF), 209–229 (IVLY…GGYA), 230–250 (GLGY…MAWG), and 264–284 (VFGF…VDSQ).

This sequence belongs to the UbiA prenyltransferase family. Protoheme IX farnesyltransferase subfamily.

The protein resides in the cell inner membrane. The catalysed reaction is heme b + (2E,6E)-farnesyl diphosphate + H2O = Fe(II)-heme o + diphosphate. The protein operates within porphyrin-containing compound metabolism; heme O biosynthesis; heme O from protoheme: step 1/1. Its function is as follows. Converts heme B (protoheme IX) to heme O by substitution of the vinyl group on carbon 2 of heme B porphyrin ring with a hydroxyethyl farnesyl side group. This is Protoheme IX farnesyltransferase 2 from Pseudomonas entomophila (strain L48).